We begin with the raw amino-acid sequence, 141 residues long: Metallothiol transferase FosB (141 aa).

Residues 5 to 120 (SINHLLFSVS…DGHKFEFHTG (116 aa)) form the VOC domain. The Mg(2+) site is built by histidine 8, histidine 67, and glutamate 116. The active-site Proton donor/acceptor is glutamate 116.

This sequence belongs to the fosfomycin resistance protein family. FosB subfamily. Homodimer. Mg(2+) is required as a cofactor.

The protein localises to the cytoplasm. Its function is as follows. Metallothiol transferase which confers resistance to fosfomycin by catalyzing the addition of a thiol cofactor to fosfomycin. L-cysteine is probably the physiological thiol donor. The sequence is that of Metallothiol transferase FosB from Lysinibacillus sphaericus (strain C3-41).